The chain runs to 239 residues: Homeobox-leucine zipper protein HOX12 (239 aa).

The segment at 22 to 65 (PEAATSGGEQKKARQRRRRKVKPEAAAALAGESGGDEQAKKRRL) is disordered. A DNA-binding region (homeobox) is located at residues 58–117 (EQAKKRRLSDEQARFLEMSFKKERKLETPRKVQLAAELGLDAKQVAVWFQNRRARHKSKL). A coiled-coil region spans residues 107 to 168 (QNRRARHKSK…KLAAVAAATT (62 aa)).

Belongs to the HD-ZIP homeobox family. Class I subfamily. Expressed in seedlings, roots, stems, leaf sheaths and panicles.

It is found in the nucleus. Its function is as follows. Probable transcription factor. The polypeptide is Homeobox-leucine zipper protein HOX12 (HOX12) (Oryza sativa subsp. indica (Rice)).